The primary structure comprises 257 residues: Nickel import system ATP-binding protein NikD (257 aa).

Positions Ile4–Ile245 constitute an ABC transporter domain. Gly37 to Ser44 contributes to the ATP binding site.

It belongs to the ABC transporter superfamily. As to quaternary structure, the complex is composed of two ATP-binding proteins (NikD and NikE), two transmembrane proteins (NikB and NikC) and a solute-binding protein (NikA).

The protein localises to the cell membrane. The enzyme catalyses Ni(2+)(out) + ATP + H2O = Ni(2+)(in) + ADP + phosphate + H(+). In terms of biological role, part of the ABC transporter complex NikABCDE (Opp2) involved in nickel import. Probably responsible for energy coupling to the transport system. The chain is Nickel import system ATP-binding protein NikD from Staphylococcus aureus (strain MW2).